A 154-amino-acid chain; its full sequence is Interleukin-2 (154 aa).

A signal peptide spans 1–20; it reads MCKMQLLSCIALSLVLVANS. Thr-23 carries an O-linked (GalNAc...) threonine glycan. A disulfide bond links Cys-78 and Cys-126.

It belongs to the IL-2 family.

It is found in the secreted. In terms of biological role, cytokine produced by activated CD4-positive helper T-cells and to a lesser extend activated CD8-positive T-cells and natural killer (NK) cells that plays pivotal roles in the immune response and tolerance. Binds to a receptor complex composed of either the high-affinity trimeric IL-2R (IL2RA/CD25, IL2RB/CD122 and IL2RG/CD132) or the low-affinity dimeric IL-2R (IL2RB and IL2RG). Interaction with the receptor leads to oligomerization and conformation changes in the IL-2R subunits resulting in downstream signaling starting with phosphorylation of JAK1 and JAK3. In turn, JAK1 and JAK3 phosphorylate the receptor to form a docking site leading to the phosphorylation of several substrates including STAT5. This process leads to activation of several pathways including STAT, phosphoinositide-3-kinase/PI3K and mitogen-activated protein kinase/MAPK pathways. Functions as a T-cell growth factor and can increase NK-cell cytolytic activity as well. Promotes strong proliferation of activated B-cells and subsequently immunoglobulin production. Plays a pivotal role in regulating the adaptive immune system by controlling the survival and proliferation of regulatory T-cells, which are required for the maintenance of immune tolerance. Moreover, participates in the differentiation and homeostasis of effector T-cell subsets, including Th1, Th2, Th17 as well as memory CD8-positive T-cells. The polypeptide is Interleukin-2 (IL2) (Mirounga angustirostris (Northern elephant seal)).